The chain runs to 793 residues: MIITRKWLEKYLDLSNITNEQISVCLNSLGFEVEQEIDYSKLNTKLVIGHIEESDPIEGTKLKKTKTRIGENKYATILSTSRNIEEDKFAIVALPGAKLANGLELENREILGILSEGMFCGFNEIGLPNSVLTEDEQQDVYYIDSIYKNMDEMVGREISEVLNFDDYTFEVDLTLNRSDALAAKQLVKEIANYFDLKINNNEHKVKFEKPTESITIDLNKKVEDEVNTVSHTFIGLKNTNTPFDSSHDVWLKHSNVKSAQNKFENIANMATLISGQPFILIDADKVNGELTLTKQTIDEKELIVLKSGNSIVNILGLKTEDKFKVTEETVTMLVVMLNLDQISMRKQQRNLNVSTVDTQRYAKPLNPNLYDQGIDELVSILDEYKMLEDVQKVVTTVQKQNYDNVYSITLEKVQDILGIEITVEEIISLFRTLDIEISVKKSELTFTVDKNRTDLYGKNDLCEEIARLYGYDNIIEQPLEYVSFKKTKNLDKKLKDKLSDYLVGAGFNNIKTYSLTDIESNKTWNLFKVKDPVVLMSPLSIQRETFRNNLSKSMIDTIIFNANNGNKSVKFFEMADIFALNGFRQSNLCFGVSGEAITDSLSQVHIKSNYAYISSILMSVLDLYKVDVTNVTFEVNDKAIDEIHPYINATVKYKNKKIGFIYKLNPAFEQANKIYPTFICEVNLNLLLEIADKVHVTSEISKFQKSTRDISFELSNDVNFDTIVKAMLKDLNYLTNYKVIDKYSDEQMDKENISSLTVKLSFNSLDHQLTEKEINDDFEKILNNLKELKVKVR.

The 120-residue stretch at Ser40–Ser159 folds into the tRNA-binding domain. The B5 domain occupies Asn401–Glu476. Positions 454, 460, 463, and 464 each coordinate Mg(2+). In terms of domain architecture, FDX-ACB spans Ser701–Arg793.

The protein belongs to the phenylalanyl-tRNA synthetase beta subunit family. Type 1 subfamily. In terms of assembly, tetramer of two alpha and two beta subunits. The cofactor is Mg(2+).

Its subcellular location is the cytoplasm. It catalyses the reaction tRNA(Phe) + L-phenylalanine + ATP = L-phenylalanyl-tRNA(Phe) + AMP + diphosphate + H(+). This chain is Phenylalanine--tRNA ligase beta subunit, found in Mesoplasma florum (strain ATCC 33453 / NBRC 100688 / NCTC 11704 / L1) (Acholeplasma florum).